A 424-amino-acid polypeptide reads, in one-letter code: STAM-binding protein (424 aa).

The segment at 1 to 127 (MSDHGDVSLP…YEQYKERKKK (127 aa)) is interaction with CHMP3. 2 positions are modified to phosphoserine: Ser-2 and Ser-48. The segment at 227-231 (PAKPP) is interaction with STAM. Ser-243 is modified (phosphoserine). In terms of domain architecture, MPN spans 257 to 388 (IVVPRNLCSE…LTDYGLQEIS (132 aa)). His-335, His-337, Asp-348, His-350, Cys-390, His-396, and His-398 together coordinate Zn(2+). The short motif at 335–348 (HTHPTQTAFLSSVD) is the JAMM motif element.

It belongs to the peptidase M67C family. Interacts with STAM. Interacts with SMAD6 and SMAD7. Interacts with CHMP3; the interaction appears to relieve the autoinhibition of CHMP3. Interacts with SMURF2 and RNF11; this interaction promotes ubiquitination. Requires Zn(2+) as cofactor. In terms of processing, phosphorylated after BMP type I receptor activation. Ubiquitinated by SMURF2 in the presence of RNF11. Expressed in brain.

The protein localises to the nucleus. It is found in the membrane. The protein resides in the cytoplasm. Its subcellular location is the early endosome. Inhibited by N-ethylmaleimide. Functionally, zinc metalloprotease that specifically cleaves 'Lys-63'-linked polyubiquitin chains. Does not cleave 'Lys-48'-linked polyubiquitin chains. Plays a role in signal transduction for cell growth and MYC induction mediated by IL-2 and GM-CSF. Potentiates BMP (bone morphogenetic protein) signaling by antagonizing the inhibitory action of SMAD6 and SMAD7. Has a key role in regulation of cell surface receptor-mediated endocytosis and ubiquitin-dependent sorting of receptors to lysosomes. Endosomal localization of STAMBP is required for efficient EGFR degradation but not for its internalization. Involved in the negative regulation of PI3K-AKT-mTOR and RAS-MAP signaling pathways. The sequence is that of STAM-binding protein (Stambp) from Mus musculus (Mouse).